The following is a 451-amino-acid chain: Phosphoglucosamine mutase (451 aa).

S102 (phosphoserine intermediate) is an active-site residue. Mg(2+)-binding residues include S102, D242, D244, and D246. The residue at position 102 (S102) is a Phosphoserine.

This sequence belongs to the phosphohexose mutase family. It depends on Mg(2+) as a cofactor. Post-translationally, activated by phosphorylation.

The enzyme catalyses alpha-D-glucosamine 1-phosphate = D-glucosamine 6-phosphate. Catalyzes the conversion of glucosamine-6-phosphate to glucosamine-1-phosphate. This chain is Phosphoglucosamine mutase, found in Staphylococcus carnosus (strain TM300).